A 152-amino-acid chain; its full sequence is Probable ribose-5-phosphate isomerase B (152 aa).

Residue Asp12–His13 coordinates D-ribulose 5-phosphate. The Proton acceptor role is filled by Cys70. Gly71–Gly75 is a D-ribulose 5-phosphate binding site. The Proton donor role is filled by His103. Residues Asp104, Arg114, Arg137, and Arg141 each contribute to the D-ribulose 5-phosphate site.

The protein belongs to the LacAB/RpiB family. Homodimer.

The enzyme catalyses aldehydo-D-ribose 5-phosphate = D-ribulose 5-phosphate. The protein operates within carbohydrate degradation; pentose phosphate pathway; D-ribose 5-phosphate from D-ribulose 5-phosphate (non-oxidative stage): step 1/1. Its function is as follows. Catalyzes the interconversion of ribulose-5-P and ribose-5-P. This is Probable ribose-5-phosphate isomerase B from Mycoplasma pneumoniae (strain ATCC 29342 / M129 / Subtype 1) (Mycoplasmoides pneumoniae).